The primary structure comprises 212 residues: Probable dual specificity protein phosphatase DDB_G0269404 (212 aa).

In terms of domain architecture, Tyrosine-protein phosphatase spans 30–169; that stretch reads FDAQEVIPNL…LINYEATILK (140 aa). Cys113 (phosphocysteine intermediate) is an active-site residue.

This sequence belongs to the protein-tyrosine phosphatase family. Non-receptor class dual specificity subfamily.

It catalyses the reaction O-phospho-L-tyrosyl-[protein] + H2O = L-tyrosyl-[protein] + phosphate. It carries out the reaction O-phospho-L-seryl-[protein] + H2O = L-seryl-[protein] + phosphate. The enzyme catalyses O-phospho-L-threonyl-[protein] + H2O = L-threonyl-[protein] + phosphate. Functionally, has a dual specificity toward Ser/Thr and Tyr-containing proteins. The protein is Probable dual specificity protein phosphatase DDB_G0269404 of Dictyostelium discoideum (Social amoeba).